The primary structure comprises 165 residues: MKNIVLGGGCFWCVEAVFERLKGVIDTEVGYSGGNPNPSYESVCNGDGNIEVVKINYDEKQISLLEILTLFFKIHDPTSIDKQGGDIGIQYRSIIFYENEEDKILAQNFIEEQQKIFSKKIVTKISRLQTYYKAENYHQHYFINNPNQGYCQAVIAPKLQKIQSD.

Residue Cys-10 is part of the active site.

It belongs to the MsrA Met sulfoxide reductase family.

The catalysed reaction is L-methionyl-[protein] + [thioredoxin]-disulfide + H2O = L-methionyl-(S)-S-oxide-[protein] + [thioredoxin]-dithiol. It catalyses the reaction [thioredoxin]-disulfide + L-methionine + H2O = L-methionine (S)-S-oxide + [thioredoxin]-dithiol. Functionally, has an important function as a repair enzyme for proteins that have been inactivated by oxidation. Catalyzes the reversible oxidation-reduction of methionine sulfoxide in proteins to methionine. This is Peptide methionine sulfoxide reductase MsrA from Campylobacter jejuni subsp. jejuni serotype O:23/36 (strain 81-176).